A 124-amino-acid polypeptide reads, in one-letter code: Probable cytochrome b5 1 (124 aa).

The Cytochrome b5 heme-binding domain occupies 3–79 (VKYFEPEEIV…LEEMYIGDLK (77 aa)). Residues His-38 and His-62 each coordinate heme. Residues 100–120 (PPLPLLIALIVLPAIAVIVFV) form a helical membrane-spanning segment.

Belongs to the cytochrome b5 family.

It is found in the endoplasmic reticulum membrane. The protein resides in the microsome membrane. Its function is as follows. Membrane bound hemoprotein which function as an electron carrier for several membrane bound oxygenases. This Schizosaccharomyces pombe (strain 972 / ATCC 24843) (Fission yeast) protein is Probable cytochrome b5 1.